The chain runs to 353 residues: Ferredoxin--NADP reductase (353 aa).

Residues Asp-33, Gln-41, Tyr-46, Val-86, Phe-121, Asp-293, and Thr-333 each contribute to the FAD site.

It belongs to the ferredoxin--NADP reductase type 2 family. In terms of assembly, homodimer. The cofactor is FAD.

The catalysed reaction is 2 reduced [2Fe-2S]-[ferredoxin] + NADP(+) + H(+) = 2 oxidized [2Fe-2S]-[ferredoxin] + NADPH. This chain is Ferredoxin--NADP reductase, found in Verminephrobacter eiseniae (strain EF01-2).